Reading from the N-terminus, the 87-residue chain is Small ribosomal subunit protein bS18 (87 aa).

Basic and acidic residues predominate over residues 1–10; sequence MAGKSSGDRR. The tract at residues 1–23 is disordered; sequence MAGKSSGDRRKLLRGAKVGKNAA.

The protein belongs to the bacterial ribosomal protein bS18 family. Part of the 30S ribosomal subunit. Forms a tight heterodimer with protein bS6.

Functionally, binds as a heterodimer with protein bS6 to the central domain of the 16S rRNA, where it helps stabilize the platform of the 30S subunit. The chain is Small ribosomal subunit protein bS18 from Clavibacter sepedonicus (Clavibacter michiganensis subsp. sepedonicus).